A 136-amino-acid chain; its full sequence is MTRKIVDLARSCGILYLMLFIGEWIAHHLNIGIPASIWGLLLLFLGLTFRIIKLDWVLCSASLLIRYMALLFVPVSVGVIKYADVLFSQMNVLLLPNIVSTFLTLIVVGLLSDYLFSLSSFSHLRKKVARKQAEKA.

4 helical membrane-spanning segments follow: residues 5–25, 29–49, 67–87, and 92–112; these read IVDLARSCGILYLMLFIGEWI, LNIGIPASIWGLLLLFLGLTF, YMALLFVPVSVGVIKYADVLF, and VLLLPNIVSTFLTLIVVGLLS.

It belongs to the UPF0299 family.

The protein localises to the cell inner membrane. The chain is UPF0299 membrane protein PM0880 from Pasteurella multocida (strain Pm70).